The chain runs to 288 residues: MEKYHGLEKIGEGTYGVVYKAQNNYGETFALKKIRLEKEDEGIPSTAIREISILKELKHSNIVKLYDVIHTKKRLILVFEHLDQDLKKLLDVCDGGLESVTAKSFLLQLLSGIAYCHEHRVLHRDLKPQNLLINREGELKIADFGLARAFGIPVRKYTHEVVTLWYRAPDILMGSKKYSTPIDMWSVGCIFAEMVNGRPLFPGVSETDQLMRIFRILGTPNSENWPNVTELPKYDPDFMVYEPLPWETFLKGLDDTGIDLLSKMLRLDPNQRITAKQALEHAYFKESN.

Residues 4–284 form the Protein kinase domain; it reads YHGLEKIGEG…AKQALEHAYF (281 aa). ATP-binding positions include 10–18 and Lys-32; that span reads IGEGTYGVV. Thr-14 carries the post-translational modification Phosphothreonine. Tyr-15 carries the post-translational modification Phosphotyrosine. Residue Asp-125 is the Proton acceptor of the active site. Thr-158 is modified (phosphothreonine).

This sequence belongs to the protein kinase superfamily. CMGC Ser/Thr protein kinase family. CDC2/CDKX subfamily. As to quaternary structure, may form a complex composed of at least the catalytic subunit CRK2 and a cyclin. The cofactor is Mg(2+).

It localises to the cytoplasm. The catalysed reaction is L-seryl-[protein] + ATP = O-phospho-L-seryl-[protein] + ADP + H(+). The enzyme catalyses L-threonyl-[protein] + ATP = O-phospho-L-threonyl-[protein] + ADP + H(+). It carries out the reaction [DNA-directed RNA polymerase] + ATP = phospho-[DNA-directed RNA polymerase] + ADP + H(+). With respect to regulation, phosphorylation at Thr-14 or Tyr-15 inactivates the enzyme, while phosphorylation at Thr-158 activates it. Serine/threonine-protein kinase. Involved in the control of the cell cycle. Required for entry into S-phase and mitosis. Probable component of the kinase complex that phosphorylates the repetitive C-terminus of RNA polymerase II. The chain is Cyclin-dependent kinase 2 homolog from Plasmodium vivax.